The chain runs to 43 residues: Protein PsbN (43 aa).

Residues 5 to 27 traverse the membrane as a helical segment; that stretch reads TLVAISISGLLVSFTGYALYTAF.

It belongs to the PsbN family.

The protein localises to the plastid. The protein resides in the chloroplast thylakoid membrane. Functionally, may play a role in photosystem I and II biogenesis. The sequence is that of Protein PsbN from Houttuynia cordata (Chameleon plant).